An 847-amino-acid chain; its full sequence is Mitogen-activated protein kinase kinase kinase 11 (847 aa).

Serine 11 carries the phosphoserine modification. Residues 11 to 38 (SPLGSWNGSGSGGGGGGGGGRPEGSPKA) are disordered. Positions 17-32 (NGSGSGGGGGGGGGRP) are enriched in gly residues. Serine 35 is modified (phosphoserine). Residues 41-105 (YANPVWTALF…PSNYVSRGGG (65 aa)) form the SH3 domain. One can recognise a Protein kinase domain in the interval 117 to 379 (LRLEEVIGIG…ASILQQLEAL (263 aa)). Residues 123–131 (IGIGGFGKV) and lysine 144 contribute to the ATP site. Aspartate 241 serves as the catalytic Proton acceptor. A Phosphothreonine; by autocatalysis modification is found at threonine 277. The residue at position 281 (serine 281) is a Phosphoserine; by autocatalysis and MAP4K1. At serine 394 the chain carries Phosphoserine. Leucine-zipper stretches follow at residues 403-424 (IQGL…EEEL) and 438-459 (LRRR…ELTL). 5 positions are modified to phosphoserine: serine 507, serine 524, serine 548, serine 555, and serine 556. A disordered region spans residues 537–643 (PAEPGQAWGR…SSGTPKLIQR (107 aa)). Residues 550 to 562 (RRLEDSSNGERRA) are compositionally biased toward basic and acidic residues. Residues 597–609 (SSPLGSPSTPPAL) show a composition bias toward low complexity. Serine 654, serine 693, and serine 705 each carry phosphoserine. Residues 655-847 (LGLGRDLQPP…QAPWVPEAGP (193 aa)) are disordered. A compositionally biased stretch (pro residues) spans 676 to 694 (TTPPTPTPAPCPTEPPPSP). Threonine 708 bears the Phosphothreonine mark. A phosphoserine mark is found at serine 724, serine 727, serine 740, serine 748, serine 758, serine 770, serine 789, serine 793, and serine 815. A compositionally biased stretch (low complexity) spans 760–773 (PLGLISRPRPSPLR). The span at 787–799 (RPSPLPSPQPAPR) shows a compositional bias: pro residues. Residues 800–816 (RAPWTLFPDSDPFWDSP) show a composition bias toward low complexity.

This sequence belongs to the protein kinase superfamily. STE Ser/Thr protein kinase family. MAP kinase kinase kinase subfamily. As to quaternary structure, homodimer; undergoes dimerization during activation. Interacts with MAP2K4/MKK4. Interacts with MAP2K7/MKK7. Found in a complex with SH3RF1, RAC1, MAP2K7/MKK7, MAPK8IP1/JIP1 and MAPK8/JNK1. Requires Mg(2+) as cofactor. In terms of processing, autophosphorylation on serine and threonine residues within the activation loop plays a role in enzyme activation. Thr-277 is likely to be the main autophosphorylation site. Phosphorylation of Ser-555 and Ser-556 is induced by CDC42. In terms of tissue distribution, expressed in a wide variety of normal and neoplastic tissues including fetal lung, liver, heart and kidney, and adult lung, liver, heart, kidney, placenta, skeletal muscle, pancreas and brain.

It localises to the cytoplasm. The protein localises to the cytoskeleton. It is found in the microtubule organizing center. The protein resides in the centrosome. It carries out the reaction L-seryl-[protein] + ATP = O-phospho-L-seryl-[protein] + ADP + H(+). It catalyses the reaction L-threonyl-[protein] + ATP = O-phospho-L-threonyl-[protein] + ADP + H(+). With respect to regulation, homodimerization via the leucine zipper domains is required for autophosphorylation and subsequent activation. Functionally, activates the JUN N-terminal pathway. Required for serum-stimulated cell proliferation and for mitogen and cytokine activation of MAPK14 (p38), MAPK3 (ERK) and MAPK8 (JNK1) through phosphorylation and activation of MAP2K4/MKK4 and MAP2K7/MKK7. Plays a role in mitogen-stimulated phosphorylation and activation of BRAF, but does not phosphorylate BRAF directly. Influences microtubule organization during the cell cycle. This chain is Mitogen-activated protein kinase kinase kinase 11, found in Homo sapiens (Human).